The following is a 514-amino-acid chain: Ribonuclease Y (514 aa).

Residues 2–22 (EDLIVAIVVGAFSSAISIFVV) traverse the membrane as a helical segment. One can recognise a KH domain in the interval 204–268 (LINNIPLNDE…VATKTIRELL (65 aa)). Residues 330–423 (ALAHTLEVAH…VCAADALSAA (94 aa)) form the HD domain.

Belongs to the RNase Y family.

Its subcellular location is the cell membrane. Endoribonuclease that initiates mRNA decay. This is Ribonuclease Y from Aliarcobacter butzleri (strain RM4018) (Arcobacter butzleri).